Here is a 570-residue protein sequence, read N- to C-terminus: Protein HEATR9 (570 aa).

The protein is Protein HEATR9 (HEATR9) of Macaca fascicularis (Crab-eating macaque).